We begin with the raw amino-acid sequence, 307 residues long: Myeloid-associated differentiation marker homolog (307 aa).

MARVEL domains follow at residues threonine 15–glycine 148 and tyrosine 153–phenylalanine 304. 8 helical membrane passes run proline 19–valine 39, leucine 51–phenylalanine 71, phenylalanine 85–proline 105, isoleucine 123–threonine 143, threonine 156–isoleucine 176, tryptophan 190–valine 210, tyrosine 228–phenylalanine 248, and methionine 278–tyrosine 298.

It belongs to the MAL family.

The protein localises to the membrane. This is Myeloid-associated differentiation marker homolog (myadm) from Xenopus laevis (African clawed frog).